Reading from the N-terminus, the 217-residue chain is Thiamine-phosphate synthase (217 aa).

Residues 39 to 43 and asparagine 71 each bind 4-amino-2-methyl-5-(diphosphooxymethyl)pyrimidine; that span reads QLRRK. 2 residues coordinate Mg(2+): aspartate 72 and aspartate 91. Serine 110 provides a ligand contact to 4-amino-2-methyl-5-(diphosphooxymethyl)pyrimidine. A 2-[(2R,5Z)-2-carboxy-4-methylthiazol-5(2H)-ylidene]ethyl phosphate-binding site is contributed by 137–139; sequence SPT. Lysine 140 lines the 4-amino-2-methyl-5-(diphosphooxymethyl)pyrimidine pocket. Residues glycine 173 and 193–194 contribute to the 2-[(2R,5Z)-2-carboxy-4-methylthiazol-5(2H)-ylidene]ethyl phosphate site; that span reads IS.

This sequence belongs to the thiamine-phosphate synthase family. It depends on Mg(2+) as a cofactor.

The catalysed reaction is 2-[(2R,5Z)-2-carboxy-4-methylthiazol-5(2H)-ylidene]ethyl phosphate + 4-amino-2-methyl-5-(diphosphooxymethyl)pyrimidine + 2 H(+) = thiamine phosphate + CO2 + diphosphate. It carries out the reaction 2-(2-carboxy-4-methylthiazol-5-yl)ethyl phosphate + 4-amino-2-methyl-5-(diphosphooxymethyl)pyrimidine + 2 H(+) = thiamine phosphate + CO2 + diphosphate. The enzyme catalyses 4-methyl-5-(2-phosphooxyethyl)-thiazole + 4-amino-2-methyl-5-(diphosphooxymethyl)pyrimidine + H(+) = thiamine phosphate + diphosphate. It participates in cofactor biosynthesis; thiamine diphosphate biosynthesis; thiamine phosphate from 4-amino-2-methyl-5-diphosphomethylpyrimidine and 4-methyl-5-(2-phosphoethyl)-thiazole: step 1/1. In terms of biological role, condenses 4-methyl-5-(beta-hydroxyethyl)thiazole monophosphate (THZ-P) and 2-methyl-4-amino-5-hydroxymethyl pyrimidine pyrophosphate (HMP-PP) to form thiamine monophosphate (TMP). This Bordetella parapertussis (strain 12822 / ATCC BAA-587 / NCTC 13253) protein is Thiamine-phosphate synthase.